Reading from the N-terminus, the 383-residue chain is Na(+)/H(+) antiporter NhaA (383 aa).

A run of 11 helical transmembrane segments spans residues 21-41 (AAGV…NSIW), 56-76 (LTMR…LAGL), 94-114 (LLPG…YVAF), 123-143 (GWAI…ALAG), 152-172 (VFLT…IALF), 175-195 (GTLS…LLML), 202-222 (TLFP…KSGI), 258-278 (FVIL…GVTV), 287-307 (LGVG…AVSI), 326-346 (IGIA…AILA), and 355-375 (QIKL…YILL).

This sequence belongs to the NhaA Na(+)/H(+) (TC 2.A.33) antiporter family.

It is found in the cell inner membrane. The catalysed reaction is Na(+)(in) + 2 H(+)(out) = Na(+)(out) + 2 H(+)(in). Its function is as follows. Na(+)/H(+) antiporter that extrudes sodium in exchange for external protons. In Granulibacter bethesdensis (strain ATCC BAA-1260 / CGDNIH1), this protein is Na(+)/H(+) antiporter NhaA.